We begin with the raw amino-acid sequence, 227 residues long: Protein LppM (227 aa).

The first 24 residues, 1 to 24, serve as a signal peptide directing secretion; sequence MARTRRRGMLAIAMLLMLVPLATG. C25 carries the N-palmitoyl cysteine lipid modification. Residue C25 is the site of S-diacylglycerol cysteine attachment. Positions 26-185 are important for bacterial uptake by host macrophages; that stretch reads LRVRASITIS…ARYTDPNTRS (160 aa). Residues 190–210 traverse the membrane as a helical segment; it reads GIWLGIAAFAAAGVVAVLAWI.

Post-translationally, a shorter form (about 20 kDa) is secreted; upon overexpression of the whole protein in M.smegmatis the C-terminus of the short form is about residue 187, suggesting it is generated by cleavage of the protein before its C-terminal transmembrane domain.

The protein resides in the membrane. It localises to the secreted. The protein localises to the cell wall. A putative lipoprotein that seems to be specialized for the initial steps of macrophage infection. A non-acylated fragment (residues 26-185) binds phosphatidyl-myo-inositol mannosides (PIMs). Limits, in a TLR2-dependent fashion, bacterial uptake by host (mouse); this effect may be mediated by nonacylated fragment 26-185. Plays a TLR2-dependent role in host phagosome maturation arrest. Plays a TLR2-independent role in chemokine production during the first 24 hours of mouse infection. The chain is Protein LppM (lppM) from Mycobacterium tuberculosis (strain ATCC 25618 / H37Rv).